Consider the following 109-residue polypeptide: Parvalbumin, thymic (109 aa).

A2 is subject to N-acetylalanine. 2 EF-hand domains span residues 39–74 and 78–109; these read KTPD…FSSS and LTSA…LVKA. Ca(2+)-binding residues include D52, D54, S56, E63, D91, D93, D95, K97, and E102.

The protein belongs to the parvalbumin family.

In terms of biological role, appears to promote immune maturation in bone marrow cells in culture. Binds two calcium ions. The sequence is that of Parvalbumin, thymic from Gallus gallus (Chicken).